The chain runs to 345 residues: Anthranilate phosphoribosyltransferase 1 (345 aa).

5-phospho-alpha-D-ribose 1-diphosphate contacts are provided by residues glycine 86, 89-90 (GD), threonine 94, 96-99 (NIST), 114-122 (KHGGRGVSS), and serine 126. Glycine 86 contacts anthranilate. Mg(2+) is bound at residue serine 98. An anthranilate-binding site is contributed by arginine 172. Residues aspartate 231 and glutamate 232 each coordinate Mg(2+).

Belongs to the anthranilate phosphoribosyltransferase family. Homodimer. Mg(2+) is required as a cofactor.

The catalysed reaction is N-(5-phospho-beta-D-ribosyl)anthranilate + diphosphate = 5-phospho-alpha-D-ribose 1-diphosphate + anthranilate. Its pathway is amino-acid biosynthesis; L-tryptophan biosynthesis; L-tryptophan from chorismate: step 2/5. Catalyzes the transfer of the phosphoribosyl group of 5-phosphorylribose-1-pyrophosphate (PRPP) to anthranilate to yield N-(5'-phosphoribosyl)-anthranilate (PRA). The sequence is that of Anthranilate phosphoribosyltransferase 1 from Ralstonia nicotianae (strain ATCC BAA-1114 / GMI1000) (Ralstonia solanacearum).